Here is a 28-residue protein sequence, read N- to C-terminus: Cyclotide vodo I2 (28 aa).

Disulfide bonds link Cys-4-Cys-18, Cys-8-Cys-20, and Cys-13-Cys-25.

In terms of processing, this is a cyclic peptide. Contains 3 disulfide bonds.

Probably participates in a plant defense mechanism. This chain is Cyclotide vodo I2, found in Viola odorata (Sweet violet).